The following is a 986-amino-acid chain: Ubiquitin carboxyl-terminal hydrolase 37 (986 aa).

A KEN box 1 motif is present at residues 32-34; sequence KDN. Short sequence motifs (D-box) lie at residues 71 to 79 and 96 to 105; these read CLMLTLKDT and RMYLDAVHQD. Disordered regions lie at residues 134–238 and 251–305; these read NRQF…MSDP and LKLK…KRSL. The span at 149–159 shows a compositional bias: basic and acidic residues; sequence VTVESKDETPF. The D-box 3 signature appears at 160-168; sequence RKVLGTPAR. The span at 171–195 shows a compositional bias: polar residues; the sequence is VKNSSGTGAPSNRVNVAASPTSSVP. The KEN box 2 motif lies at 224–226; it reads KEN. The span at 251 to 260 shows a compositional bias: basic and acidic residues; that stretch reads LKLKQEEENR. The segment covering 269-298 has biased composition (low complexity); sequence SSSYYGSRSSSKEYSTSSSTLDRSSVSSQT. The USP domain maps to 344 to 958; sequence QGFSNLGNTC…SGYIFFYMHK (615 aa). Catalysis depends on C353, which acts as the Nucleophile. Disordered stretches follow at residues 683–710 and 729–751; these read VQRG…GFDG and SLSL…GDDE. Residues 712 to 731 enclose the UIM 1 domain; it reads SEDELLAAVLEISKREASLS. Over residues 729 to 739 the composition is skewed to basic and acidic residues; sequence SLSLSHDEDKP. The short motif at 789–791 is the KEN box 3 element; sequence KEN. The segment at 811–840 is disordered; sequence REREEQELQQALAQSLQEQEAREQKEDDDL. 2 consecutive UIM domains span residues 813 to 832 and 835 to 854; these read REEQ…QEAR and KEDD…FNSS. Residues 818–828 show a composition bias toward low complexity; it reads LQQALAQSLQE. Over residues 829–840 the composition is skewed to basic and acidic residues; the sequence is QEAREQKEDDDL. The active-site Proton acceptor is H913.

This sequence belongs to the peptidase C19 family.

It catalyses the reaction Thiol-dependent hydrolysis of ester, thioester, amide, peptide and isopeptide bonds formed by the C-terminal Gly of ubiquitin (a 76-residue protein attached to proteins as an intracellular targeting signal).. Functionally, deubiquitinase that antagonizes the anaphase-promoting complex (APC/C) during G1/S transition by mediating deubiquitination of APC/C target proteins, thereby promoting S phase entry. Specifically mediates deubiquitination of 'Lys-11'-linked polyubiquitin chains, a specific ubiquitin-linkage type mediated by the APC/C complex. The polypeptide is Ubiquitin carboxyl-terminal hydrolase 37 (USP37) (Gallus gallus (Chicken)).